Reading from the N-terminus, the 527-residue chain is SusD-like protein P25 (527 aa).

An N-terminal signal peptide occupies residues 1-15 (MKIQNIIVYVFLIFS). Cys16 carries the N-palmitoyl cysteine lipid modification. Cys16 carries S-diacylglycerol cysteine lipidation.

It belongs to the SusD family.

Its subcellular location is the cell outer membrane. Its function is as follows. Polysaccharide-binding protein probably involved in ulvan degradation. Ulvan is the main polysaccharide component of the Ulvales (green seaweed) cell wall. It is composed of disaccharide building blocks comprising 3-sulfated rhamnose (Rha3S) linked to D-glucuronic acid (GlcA), L-iduronic acid (IduA), or D-xylose (Xyl). The SusD-like protein may mediate ulvan oligomer-binding before transport in the periplasm for further degradation. This chain is SusD-like protein P25, found in Formosa agariphila (strain DSM 15362 / KCTC 12365 / LMG 23005 / KMM 3901 / M-2Alg 35-1).